Reading from the N-terminus, the 439-residue chain is Tubulin beta chain (439 aa).

Residues Gln-11, Glu-69, Ser-138, Gly-142, Thr-143, Gly-144, Asn-204, and Asn-226 each contribute to the GTP site. Residue Glu-69 participates in Mg(2+) binding.

The protein belongs to the tubulin family. In terms of assembly, dimer of alpha and beta chains. A typical microtubule is a hollow water-filled tube with an outer diameter of 25 nm and an inner diameter of 15 nM. Alpha-beta heterodimers associate head-to-tail to form protofilaments running lengthwise along the microtubule wall with the beta-tubulin subunit facing the microtubule plus end conferring a structural polarity. Microtubules usually have 13 protofilaments but different protofilament numbers can be found in some organisms and specialized cells. Requires Mg(2+) as cofactor.

The protein resides in the cytoplasm. It is found in the cytoskeleton. Its function is as follows. Tubulin is the major constituent of microtubules, a cylinder consisting of laterally associated linear protofilaments composed of alpha- and beta-tubulin heterodimers. Microtubules grow by the addition of GTP-tubulin dimers to the microtubule end, where a stabilizing cap forms. Below the cap, tubulin dimers are in GDP-bound state, owing to GTPase activity of alpha-tubulin. The protein is Tubulin beta chain (TUB2) of Encephalitozoon cuniculi (strain GB-M1) (Microsporidian parasite).